Here is a 243-residue protein sequence, read N- to C-terminus: 3-deoxy-manno-octulosonate cytidylyltransferase (243 aa).

Belongs to the KdsB family.

Its subcellular location is the cytoplasm. It carries out the reaction 3-deoxy-alpha-D-manno-oct-2-ulosonate + CTP = CMP-3-deoxy-beta-D-manno-octulosonate + diphosphate. Its pathway is nucleotide-sugar biosynthesis; CMP-3-deoxy-D-manno-octulosonate biosynthesis; CMP-3-deoxy-D-manno-octulosonate from 3-deoxy-D-manno-octulosonate and CTP: step 1/1. It participates in bacterial outer membrane biogenesis; lipopolysaccharide biosynthesis. Functionally, activates KDO (a required 8-carbon sugar) for incorporation into bacterial lipopolysaccharide in Gram-negative bacteria. This is 3-deoxy-manno-octulosonate cytidylyltransferase from Bartonella quintana (strain Toulouse) (Rochalimaea quintana).